The chain runs to 427 residues: Phosphoribosylamine--glycine ligase (427 aa).

The ATP-grasp domain maps to 107 to 312; it reads KDLCARFNIP…LLALVNAAVD (206 aa). An ATP-binding site is contributed by 133-193; that stretch reads IRQQGAPIVV…EEFLDGEEAS (61 aa). Mg(2+) contacts are provided by Glu-282 and Asn-284.

Belongs to the GARS family. It depends on Mg(2+) as a cofactor. The cofactor is Mn(2+).

The enzyme catalyses 5-phospho-beta-D-ribosylamine + glycine + ATP = N(1)-(5-phospho-beta-D-ribosyl)glycinamide + ADP + phosphate + H(+). The protein operates within purine metabolism; IMP biosynthesis via de novo pathway; N(1)-(5-phospho-D-ribosyl)glycinamide from 5-phospho-alpha-D-ribose 1-diphosphate: step 2/2. The sequence is that of Phosphoribosylamine--glycine ligase from Brucella melitensis biotype 1 (strain ATCC 23456 / CCUG 17765 / NCTC 10094 / 16M).